A 350-amino-acid polypeptide reads, in one-letter code: Small ribosomal subunit protein uS3 (350 aa).

The KH type-2 domain maps to Ile38–Lys106. Positions Ala211–Glu350 are disordered. The span at Gln222–Pro232 shows a compositional bias: basic residues. The span at Asn261 to Glu350 shows a compositional bias: low complexity.

Belongs to the universal ribosomal protein uS3 family. Part of the 30S ribosomal subunit. Forms a tight complex with proteins S10 and S14.

Functionally, binds the lower part of the 30S subunit head. Binds mRNA in the 70S ribosome, positioning it for translation. The chain is Small ribosomal subunit protein uS3 from Frankia alni (strain DSM 45986 / CECT 9034 / ACN14a).